The sequence spans 527 residues: Rhamnogalacturonate lyase A (527 aa).

Positions 1 to 19 (MLKASLLSFVAFTAQVAHA) are cleaved as a signal peptide. 2 disulfide bridges follow: cysteine 49-cysteine 92 and cysteine 183-cysteine 192. A glycan (N-linked (GlcNAc...) asparagine) is linked at asparagine 350.

The protein belongs to the polysaccharide lyase 4 family.

Its subcellular location is the secreted. It catalyses the reaction Endotype eliminative cleavage of L-alpha-rhamnopyranosyl-(1-&gt;4)-alpha-D-galactopyranosyluronic acid bonds of rhamnogalacturonan I domains in ramified hairy regions of pectin leaving L-rhamnopyranose at the reducing end and 4-deoxy-4,5-unsaturated D-galactopyranosyluronic acid at the non-reducing end.. Its function is as follows. Pectinolytic enzyme that has a positive effect in the apple hot-mash liquefaction process. This endolyase hydrolyzes the alpha-L-rhamnopyranosyl-(1,4)-alpha-D-galacturonopyranosyl glycosidic linkage by beta-elimination, thereby generating oligosaccharides terminating at the non-reducing end with a hex-4-enopyranosyluronic acid residue. This chain is Rhamnogalacturonate lyase A (rglA), found in Aspergillus aculeatus.